The following is a 412-amino-acid chain: Subtilisin-like protease 6 (412 aa).

An N-terminal signal peptide occupies residues 1 to 20 (MGFITKAIPIVLAALSTVNG). A propeptide spanning residues 21 to 127 (ARILEAGPHA…VRTTTNGTNL (107 aa)) is cleaved from the precursor. One can recognise an Inhibitor I9 domain in the interval 36–120 (KYIVVMKKDV…FIEPDFVVRT (85 aa)). The 278-residue stretch at 135–412 (SWGLARVGSK…SKLIYNGSGK (278 aa)) folds into the Peptidase S8 domain. Catalysis depends on charge relay system residues Asp167 and His198. N-linked (GlcNAc...) asparagine glycans are attached at residues Asn252 and Asn264. Ser358 (charge relay system) is an active-site residue. A glycan (N-linked (GlcNAc...) asparagine) is linked at Asn408.

It belongs to the peptidase S8 family.

Its subcellular location is the secreted. Secreted subtilisin-like serine protease with keratinolytic activity that contributes to pathogenicity. This is Subtilisin-like protease 6 (SUB6) from Arthroderma benhamiae (strain ATCC MYA-4681 / CBS 112371) (Trichophyton mentagrophytes).